Consider the following 404-residue polypeptide: Multidrug resistance protein MdtG (404 aa).

11 helical membrane-spanning segments follow: residues 19–39, 56–76, 90–110, 113–133, 144–164, 171–191, 222–242, 254–274, 288–308, 317–337, and 376–396; these read LGCFLTGAAFSLVMPFLPLYV, LVFSITFLFSAIASPFWGGLA, LGMAIVMLLMGMAQNIWQFLI, ALLGLLGGFIPNANALIATQV, TLSTGGVSGALLGPLAGGLLA, PVFFITASVLFICFLLTFFFI, LFVTTLIIQVATGSIAPILTL, IAFISGMIASVPGVAALLSAP, ILIVALIISVLLLIPMSFVQT, FLLGAADGALLPAVQTLLVYN, and AVFCVTAGVVLFNAIYSWNSL.

Belongs to the major facilitator superfamily. DHA1 family. MdtG (TC 2.A.1.2.20) subfamily.

It localises to the cell inner membrane. The protein is Multidrug resistance protein MdtG of Salmonella agona (strain SL483).